The following is a 300-amino-acid chain: uncharacterized protein (300 aa).

His-274 (proton acceptor) is an active-site residue.

Belongs to the AB hydrolase superfamily. In terms of assembly, monomer.

It catalyses the reaction a carboxylic ester + H2O = an alcohol + a carboxylate + H(+). This is an uncharacterized protein from Bacillus subtilis (strain 168).